We begin with the raw amino-acid sequence, 445 residues long: Trigger factor (445 aa).

Residues 162-247 (GDQVTIDAIG…IKAVHTAEPT (86 aa)) enclose the PPIase FKBP-type domain.

This sequence belongs to the FKBP-type PPIase family. Tig subfamily.

The protein localises to the cytoplasm. It catalyses the reaction [protein]-peptidylproline (omega=180) = [protein]-peptidylproline (omega=0). In terms of biological role, involved in protein export. Acts as a chaperone by maintaining the newly synthesized protein in an open conformation. Functions as a peptidyl-prolyl cis-trans isomerase. This is Trigger factor from Rickettsia peacockii (strain Rustic).